Here is a 341-residue protein sequence, read N- to C-terminus: tRNA N6-adenosine threonylcarbamoyltransferase (341 aa).

Positions 115 and 119 each coordinate Fe cation. Residues 138–142, Asp-171, Gly-184, Asp-188, and Asn-279 contribute to the substrate site; that span reads VVSGG. Asp-307 lines the Fe cation pocket.

Belongs to the KAE1 / TsaD family. It depends on Fe(2+) as a cofactor.

It is found in the cytoplasm. It carries out the reaction L-threonylcarbamoyladenylate + adenosine(37) in tRNA = N(6)-L-threonylcarbamoyladenosine(37) in tRNA + AMP + H(+). In terms of biological role, required for the formation of a threonylcarbamoyl group on adenosine at position 37 (t(6)A37) in tRNAs that read codons beginning with adenine. Is involved in the transfer of the threonylcarbamoyl moiety of threonylcarbamoyl-AMP (TC-AMP) to the N6 group of A37, together with TsaE and TsaB. TsaD likely plays a direct catalytic role in this reaction. The sequence is that of tRNA N6-adenosine threonylcarbamoyltransferase from Clostridium kluyveri (strain NBRC 12016).